A 258-amino-acid polypeptide reads, in one-letter code: MYRRIIMCFRSRATLNSFQRGMCCSTRRYVSSTGSEDDIKNFIIDNTEIVNSQSLTPEISLRLFTPTCRFWTENPEFWPFPDPYWAIYWPGGQALARYLLNNPEVSAGRKVLDLGCGCGASAIAARLSGASCVVANDIDPIAAIATKMNCELNNLAPLPCVTDNMIGSETDGWDLILLGDMFYDEALADGLHQWLQTCTNTHGTQVLIGDPGRAQFEDHNIRRSLHRLAHFQLPDSVKEENYGLTSSAVWRYNCKPDH.

The protein belongs to the methyltransferase superfamily. ETFBKMT family.

Its subcellular location is the cytoplasm. It is found in the mitochondrion matrix. The enzyme catalyses L-lysyl-[protein] + 3 S-adenosyl-L-methionine = N(6),N(6),N(6)-trimethyl-L-lysyl-[protein] + 3 S-adenosyl-L-homocysteine + 3 H(+). In terms of biological role, protein-lysine methyltransferase that selectively trimethylates the flavoprotein ETFB in mitochondria. Thereby, may negatively regulate the function of ETFB in electron transfer from Acyl-CoA dehydrogenases to the main respiratory chain. This Danio rerio (Zebrafish) protein is Electron transfer flavoprotein beta subunit lysine methyltransferase.